A 423-amino-acid polypeptide reads, in one-letter code: Glutamate-1-semialdehyde 2,1-aminomutase (423 aa).

Position 266 is an N6-(pyridoxal phosphate)lysine (Lys-266).

Belongs to the class-III pyridoxal-phosphate-dependent aminotransferase family. HemL subfamily. In terms of assembly, homodimer. Requires pyridoxal 5'-phosphate as cofactor.

The protein localises to the cytoplasm. The catalysed reaction is (S)-4-amino-5-oxopentanoate = 5-aminolevulinate. Its pathway is porphyrin-containing compound metabolism; protoporphyrin-IX biosynthesis; 5-aminolevulinate from L-glutamyl-tRNA(Glu): step 2/2. This Nitratidesulfovibrio vulgaris (strain ATCC 29579 / DSM 644 / CCUG 34227 / NCIMB 8303 / VKM B-1760 / Hildenborough) (Desulfovibrio vulgaris) protein is Glutamate-1-semialdehyde 2,1-aminomutase.